The primary structure comprises 218 residues: Probable carboxylesterase clz11 (218 aa).

The Involved in the stabilization of the negatively charged intermediate by the formation of the oxyanion hole motif lies at 7 to 9 (LVG). Residue Ser77 is part of the active site.

Belongs to the 'GDXG' lipolytic enzyme family.

The catalysed reaction is a carboxylic ester + H2O = an alcohol + a carboxylate + H(+). Its pathway is secondary metabolite biosynthesis. Probable carboxylesterase; part of the gene cluster that mediates the biosynthesis of squalestatin S1 (SQS1, also known as zaragozic acid A), a heavily oxidized fungal polyketide that offers potent cholesterol lowering activity by targeting squalene synthase (SS). SQS1 is composed of a 2,8-dioxobicyclic[3.2.1]octane-3,4,5-tricarboxyclic acid core that is connected to two lipophilic polyketide arms. These initial steps feature the priming of an unusual benzoic acid starter unit onto the highly reducing polyketide synthase clz14, followed by oxaloacetate extension and product release to generate a tricarboxylic acid containing product. The phenylalanine ammonia lyase (PAL) clz10 and the acyl-CoA ligase clz12 are involved in transforming phenylalanine into benzoyl-CoA. The citrate synthase-like protein clz17 is involved in connecting the C-alpha-carbons of the hexaketide chain and oxaloacetate to afford the tricarboxylic acid unit. The potential hydrolytic enzymes, clz11 and clz13, are in close proximity to pks2 and may participate in product release. On the other side, the tetraketide arm is synthesized by a the squalestatin tetraketide synthase clz2 and enzymatically esterified to the core in the last biosynthetic step, by the acetyltransferase clz6. The biosynthesis of the tetraketide must involve 3 rounds of chain extension. After the first and second rounds methyl-transfer occurs, and in all rounds of extension the ketoreductase and dehydratase are active. The enoyl reductase and C-MeT of clz2 are not active in the final round of extension. The acetyltransferase clz6 appears to have a broad substrate selectivity for its acyl CoA substrate, allowing the in vitro synthesis of novel squalestatins. The biosynthesis of SQS1 requires several oxidative steps likely performed by oxidoreductases clz3, clz15 and clz16. Finally, in support of the identification of the cluster as being responsible for SQS1 production, the cluster contains a gene encoding a putative squalene synthase (SS) clz20, suggesting a likely mechanism for self-resistance. This is Probable carboxylesterase clz11 from Cochliobolus lunatus (Filamentous fungus).